We begin with the raw amino-acid sequence, 121 residues long: Small ribosomal subunit protein uS13 (121 aa).

Positions 97–121 (VRGQRTRTNARTRRGARKTVAGKKK) are disordered. Over residues 100 to 121 (QRTRTNARTRRGARKTVAGKKK) the composition is skewed to basic residues.

The protein belongs to the universal ribosomal protein uS13 family. In terms of assembly, part of the 30S ribosomal subunit. Forms a loose heterodimer with protein S19. Forms two bridges to the 50S subunit in the 70S ribosome.

Located at the top of the head of the 30S subunit, it contacts several helices of the 16S rRNA. In the 70S ribosome it contacts the 23S rRNA (bridge B1a) and protein L5 of the 50S subunit (bridge B1b), connecting the 2 subunits; these bridges are implicated in subunit movement. Contacts the tRNAs in the A and P-sites. The protein is Small ribosomal subunit protein uS13 of Synechococcus sp. (strain CC9605).